Consider the following 317-residue polypeptide: Metaxin-1 (317 aa).

Glycyl lysine isopeptide (Lys-Gly) (interchain with G-Cter in ubiquitin) cross-links involve residues Lys38, Lys41, and Lys78. Residues Glu164–Arg184 traverse the membrane as a helical segment.

It belongs to the metaxin family. Interacts with MTX2/metaxin-2. Associates with the mitochondrial contact site and cristae organizing system (MICOS) complex, composed of at least MICOS10/MIC10, CHCHD3/MIC19, CHCHD6/MIC25, APOOL/MIC27, IMMT/MIC60, APOO/MIC23/MIC26 and QIL1/MIC13. This complex was also known under the names MINOS or MitOS complex. The MICOS complex associates with mitochondrial outer membrane proteins SAMM50, MTX1 and MTX2 (together described as components of the mitochondrial outer membrane sorting assembly machinery (SAM) complex) and DNAJC11, mitochondrial inner membrane protein TMEM11 and with HSPA9. The MICOS and SAM complexes together with DNAJC11 are part of a large protein complex spanning both membranes termed the mitochondrial intermembrane space bridging (MIB) complex. Interacts with ARMC1. In terms of processing, ubiquitinated by PRKN during mitophagy, leading to its degradation and enhancement of mitophagy. Deubiquitinated by USP30.

The protein localises to the mitochondrion outer membrane. In terms of biological role, involved in transport of proteins into the mitochondrion. Essential for embryonic development. This Macaca fascicularis (Crab-eating macaque) protein is Metaxin-1 (MTX1).